Reading from the N-terminus, the 363-residue chain is Ferredoxin--NADP reductase, cyanelle (363 aa).

The N-terminal 65 residues, methionine 1–alanine 65, are a transit peptide targeting the cyanelle. Positions alanine 84–methionine 206 constitute an FAD-binding FR-type domain. FAD is bound by residues arginine 142 to serine 145, serine 163 to lysine 165, tyrosine 169, valine 180 to serine 182, and threonine 221. Serine 145 and lysine 165 together coordinate NADP(+). NADP(+)-binding positions include threonine 221, valine 253–proline 254, serine 283–arginine 284, lysine 293, glycine 322–leucine 323, and glutamate 361.

Belongs to the ferredoxin--NADP reductase type 1 family. FAD serves as cofactor.

It localises to the plastid. The protein resides in the cyanelle stroma. It is found in the cyanelle thylakoid membrane. It catalyses the reaction 2 reduced [2Fe-2S]-[ferredoxin] + NADP(+) + H(+) = 2 oxidized [2Fe-2S]-[ferredoxin] + NADPH. Its function is as follows. May play a key role in regulating the relative amounts of cyclic and non-cyclic electron flow to meet the demands of the plant for ATP and reducing power. This chain is Ferredoxin--NADP reductase, cyanelle (PETH), found in Cyanophora paradoxa.